The sequence spans 233 residues: Choline-phosphate cytidylyltransferase (233 aa).

CDP-choline contacts are provided by Leu6, Ala8, Gly9, Tyr80, Ser85, and Ala101. Mg(2+) is bound at residue Asp102. Residue Tyr187 coordinates CDP-choline. Positions 213 and 215 each coordinate Mg(2+).

Belongs to the LicC/PntC cytidylyltransferase family. The cofactor is Mg(2+).

It carries out the reaction phosphocholine + CTP + H(+) = CDP-choline + diphosphate. The protein operates within lipopolysaccharide biosynthesis. Cytidylyltransferase involved in the biosynthesis of lipopolysaccharides (LPS), a necessary component and antigenic determinant of the outer membrane that has been shown to be an important factor in the host-parasite interaction in a number of Gram-negative species. Catalyzes the activation of phosphocholine (P-Cho) to CDP-choline (CDP-Cho). LicC is critical for the expression of the 6A2-specific epitope. The polypeptide is Choline-phosphate cytidylyltransferase (Haemophilus influenzae (strain ATCC 51907 / DSM 11121 / KW20 / Rd)).